The sequence spans 299 residues: Protein U23 (299 aa).

Positions 1–27 are cleaved as a signal peptide; the sequence is MRKSEFNAKSCFLMIGICVFNLNSSSC. Residues 247-267 traverse the membrane as a helical segment; the sequence is LVIWICGISFVGAFIIVIVIL.

The protein resides in the host membrane. The polypeptide is Protein U23 (U23) (Human herpesvirus 6B (strain Z29) (HHV-6 variant B)).